Consider the following 185-residue polypeptide: Ribosome-recycling factor (185 aa).

Belongs to the RRF family.

It localises to the cytoplasm. Responsible for the release of ribosomes from messenger RNA at the termination of protein biosynthesis. May increase the efficiency of translation by recycling ribosomes from one round of translation to another. This is Ribosome-recycling factor from Thermotoga petrophila (strain ATCC BAA-488 / DSM 13995 / JCM 10881 / RKU-1).